Here is a 505-residue protein sequence, read N- to C-terminus: Glycerol kinase (505 aa).

Residue T15 coordinates ADP. Positions 15, 16, and 17 each coordinate ATP. A sn-glycerol 3-phosphate-binding site is contributed by T15. An ADP-binding site is contributed by R19. The sn-glycerol 3-phosphate site is built by R85, E86, Y136, and D249. 5 residues coordinate glycerol: R85, E86, Y136, D249, and Q250. ADP contacts are provided by T271 and G314. ATP is bound by residues T271, G314, Q318, and G415. G415 and N419 together coordinate ADP.

Belongs to the FGGY kinase family.

It carries out the reaction glycerol + ATP = sn-glycerol 3-phosphate + ADP + H(+). It functions in the pathway polyol metabolism; glycerol degradation via glycerol kinase pathway; sn-glycerol 3-phosphate from glycerol: step 1/1. With respect to regulation, inhibited by fructose 1,6-bisphosphate (FBP). Functionally, key enzyme in the regulation of glycerol uptake and metabolism. Catalyzes the phosphorylation of glycerol to yield sn-glycerol 3-phosphate. This chain is Glycerol kinase, found in Mycoplasma mycoides subsp. mycoides SC (strain CCUG 32753 / NCTC 10114 / PG1).